The sequence spans 166 residues: Phospholipase A2 inhibitor B1 (166 aa).

A signal peptide spans 1–19 (MRLILLSGLLLLGTFLVNG). The 116-residue stretch at 46–161 (LFHAFLTVHK…CDDNLLVVCE (116 aa)) folds into the C-type lectin domain. Cystine bridges form between Cys83-Cys160 and Cys138-Cys152. The N-linked (GlcNAc...) asparagine glycan is linked to Asn122.

Belongs to the alpha-type phospholipase A2 inhibitor family. Homotrimer; non-covalently linked. As to expression, expressed by the liver.

It localises to the secreted. Its function is as follows. This phospholipase A2 inhibitor binds directly phospholipase A2 in the presence or absence of calcium. This Crotalus durissus terrificus (South American rattlesnake) protein is Phospholipase A2 inhibitor B1.